The following is a 541-amino-acid chain: Arginine--tRNA ligase (541 aa).

The 'HIGH' region signature appears at 119 to 129 (ANPTGPLHIGH).

Belongs to the class-I aminoacyl-tRNA synthetase family. As to quaternary structure, monomer.

The protein localises to the cytoplasm. It catalyses the reaction tRNA(Arg) + L-arginine + ATP = L-arginyl-tRNA(Arg) + AMP + diphosphate. This is Arginine--tRNA ligase from Helicobacter acinonychis (strain Sheeba).